The sequence spans 176 residues: ATP synthase subunit b 2 (176 aa).

Residues 29-49 (IFWLVITLVIIYMVLSKVALP) traverse the membrane as a helical segment.

This sequence belongs to the ATPase B chain family. F-type ATPases have 2 components, F(1) - the catalytic core - and F(0) - the membrane proton channel. F(1) has five subunits: alpha(3), beta(3), gamma(1), delta(1), epsilon(1). F(0) has three main subunits: a(1), b(2) and c(10-14). The alpha and beta chains form an alternating ring which encloses part of the gamma chain. F(1) is attached to F(0) by a central stalk formed by the gamma and epsilon chains, while a peripheral stalk is formed by the delta and b chains.

Its subcellular location is the cell inner membrane. Functionally, f(1)F(0) ATP synthase produces ATP from ADP in the presence of a proton or sodium gradient. F-type ATPases consist of two structural domains, F(1) containing the extramembraneous catalytic core and F(0) containing the membrane proton channel, linked together by a central stalk and a peripheral stalk. During catalysis, ATP synthesis in the catalytic domain of F(1) is coupled via a rotary mechanism of the central stalk subunits to proton translocation. Its function is as follows. Component of the F(0) channel, it forms part of the peripheral stalk, linking F(1) to F(0). The b'-subunit is a diverged and duplicated form of b found in plants and photosynthetic bacteria. This chain is ATP synthase subunit b 2 (atpF2), found in Roseobacter denitrificans (strain ATCC 33942 / OCh 114) (Erythrobacter sp. (strain OCh 114)).